The chain runs to 334 residues: Putative heat shock protein HSP 90-alpha A5 (334 aa).

The segment at 55 to 107 (KRNKQVSDAEAEKKEDKRKKKKESNDKPEIEDVGSDEEEEKKDADKKKKKSKE) is disordered. Residues 59 to 69 (QVSDAEAEKKE) are compositionally biased toward basic and acidic residues. Over residues 85-94 (EDVGSDEEEE) the composition is skewed to acidic residues. S89 bears the Phosphoserine mark. A coiled-coil region spans residues 234–267 (LELPEDEEEKKKQEEKKTKFENLCKIMKDMLEKK). Positions 314-334 (EMPPLRGGDDTSRMEEVGGSG) are disordered. Positions 320–334 (GGDDTSRMEEVGGSG) are enriched in basic and acidic residues. A TPR repeat-binding motif is present at residues 327-331 (MEEVG).

The protein belongs to the heat shock protein 90 family. Homodimer.

It localises to the cytoplasm. Functionally, putative molecular chaperone that may promote the maturation, structural maintenance and proper regulation of specific target proteins. The protein is Putative heat shock protein HSP 90-alpha A5 (HSP90AA5P) of Homo sapiens (Human).